The chain runs to 150 residues: MEIILLNKVANLGGLGDNVTVKSGYARNFLFPQGQAVPATKANVEKFEARRAELEAKIAEQLAAAEARAAKVAELAEVTIASPAGDEGKLFGSVGTRDIALAITAAGVEIAKSEVKLPTGTLRETGEFEIDLQLHSEVTATIKLVIIQEA.

It belongs to the bacterial ribosomal protein bL9 family.

Functionally, binds to the 23S rRNA. This Pseudoalteromonas atlantica (strain T6c / ATCC BAA-1087) protein is Large ribosomal subunit protein bL9.